A 215-amino-acid chain; its full sequence is Glutathione S-transferase-like protein (215 aa).

The GST N-terminal domain occupies 1 to 76; it reads MPNARILKIQ…YVAASGPAAP (76 aa). The GST C-terminal domain occupies 82 to 215; that stretch reads NVAEQAAVRQ…LVAVRKEASV (134 aa).

It belongs to the GST superfamily.

The protein is Glutathione S-transferase-like protein of Aspergillus aculeatus (strain ATCC 16872 / CBS 172.66 / WB 5094).